The chain runs to 901 residues: Envelope glycoprotein B (901 aa).

Positions 1–34 (MRPVRGIARSRILSCSWRGTWTSALTILYLGVYC) are cleaved as a signal peptide. At 35–736 (ESTTVTPTTV…GALVTFVTNP (702 aa)) the chain is on the virion surface side. Residues asparagine 53, asparagine 60, and asparagine 66 are each glycosylated (N-linked (GlcNAc...) asparagine; by host). 4 cysteine pairs are disulfide-bonded: cysteine 84/cysteine 533, cysteine 101/cysteine 489, cysteine 174/cysteine 239, and cysteine 331/cysteine 380. An involved in fusion and/or binding to host membrane region spans residues 141–147 (SYKYVTY). Asparagine 197 is a glycosylation site (N-linked (GlcNAc...) asparagine; by host). The segment at 226-233 (GSVWLYKE) is involved in fusion and/or binding to host membrane. 10 N-linked (GlcNAc...) asparagine; by host glycosylation sites follow: asparagine 270, asparagine 289, asparagine 328, asparagine 372, asparagine 398, asparagine 406, asparagine 436, asparagine 537, asparagine 571, and asparagine 623. Cysteine 559 and cysteine 596 are joined by a disulfide. Hydrophobic membrane proximal region stretches follow at residues 683–734 (VERV…TFVT) and 714–734 (AVGA…TFVT). A helical transmembrane segment spans residues 737–757 (FGAFVVFLFCVGCITLVITVY). Over 758-901 (RRQRRAMQRP…KLNTEDDVHV (144 aa)) the chain is Intravirion. 2 disordered regions span residues 794–813 (GPEG…APYG) and 852–901 (DDKK…DVHV). 2 stretches are compositionally biased toward basic and acidic residues: residues 852 to 864 (DDKK…KSSK) and 872 to 883 (SETRRRPGIMDR). The Internalization motif motif lies at 890–893 (YQKL).

It belongs to the herpesviridae glycoprotein B family. Homotrimer; disulfide-linked. Binds to heparan sulfate proteoglycans. Interacts with gH/gL heterodimer. Post-translationally, a proteolytic cleavage by host furin generates two subunits that remain linked by disulfide bonds.

The protein localises to the virion membrane. Its subcellular location is the host cell membrane. It localises to the host endosome membrane. It is found in the host Golgi apparatus membrane. Functionally, envelope glycoprotein that forms spikes at the surface of virion envelope. Essential for the initial attachment to heparan sulfate moieties of the host cell surface proteoglycans. Involved in fusion of viral and cellular membranes leading to virus entry into the host cell. Following initial binding to its host receptors, membrane fusion is mediated by the fusion machinery composed at least of gB and the heterodimer gH/gL. May be involved in the fusion between the virion envelope and the outer nuclear membrane during virion egress. The polypeptide is Envelope glycoprotein B (Guinea pig cytomegalovirus (strain 22122) (GPCMV)).